The sequence spans 771 residues: Myotubularin-related protein 10 (771 aa).

The Myotubularin phosphatase domain maps to 217-657 (FETYSDWDRE…THIKLWKLCY (441 aa)). Residues Ser-603 and Ser-745 each carry the phosphoserine modification.

This sequence belongs to the protein-tyrosine phosphatase family. Non-receptor class myotubularin subfamily.

The chain is Myotubularin-related protein 10 (Mtmr10) from Mus musculus (Mouse).